A 255-amino-acid polypeptide reads, in one-letter code: Octanoyltransferase (255 aa).

Positions 1–21 are disordered; it reads MCATPVSPSPESPRSAQAGAA. One can recognise a BPL/LPL catalytic domain in the interval 56-242; the sequence is FETSDEIWLV…SLIANIDGIP (187 aa). Residues 96-103, 173-175, and 186-188 contribute to the substrate site; these read RGGQITYH, ALG, and GVS. Cysteine 204 functions as the Acyl-thioester intermediate in the catalytic mechanism.

This sequence belongs to the LipB family.

Its subcellular location is the cytoplasm. The catalysed reaction is octanoyl-[ACP] + L-lysyl-[protein] = N(6)-octanoyl-L-lysyl-[protein] + holo-[ACP] + H(+). Its pathway is protein modification; protein lipoylation via endogenous pathway; protein N(6)-(lipoyl)lysine from octanoyl-[acyl-carrier-protein]: step 1/2. In terms of biological role, catalyzes the transfer of endogenously produced octanoic acid from octanoyl-acyl-carrier-protein onto the lipoyl domains of lipoate-dependent enzymes. Lipoyl-ACP can also act as a substrate although octanoyl-ACP is likely to be the physiological substrate. The protein is Octanoyltransferase of Paraburkholderia phymatum (strain DSM 17167 / CIP 108236 / LMG 21445 / STM815) (Burkholderia phymatum).